Reading from the N-terminus, the 282-residue chain is tRNA N(3)-cytidine methyltransferase METTL6 (282 aa).

S-adenosyl-L-methionine contacts are provided by tryptophan 45, tyrosine 49, glycine 87, aspartate 110, aspartate 136, leucine 137, and isoleucine 157.

This sequence belongs to the methyltransferase superfamily. METL family. As to quaternary structure, monomer. Interacts with SARS1/SerRS; interaction is mediated via tRNA(Ser) and is required for N(3)-methylcytidine methylation.

The protein localises to the cytoplasm. Its subcellular location is the nucleus. It catalyses the reaction cytidine(32) in tRNA(Ser) + S-adenosyl-L-methionine = N(3)-methylcytidine(32) in tRNA(Ser) + S-adenosyl-L-homocysteine + H(+). Its function is as follows. S-adenosyl-L-methionine-dependent methyltransferase that mediates N(3)-methylcytidine modification of residue 32 of the tRNA anticodon loop of tRNA(Ser), including tRNA(Ser)(UGA) and tRNA(Ser)(GCU). Interaction with SARS1/SerRS is required for N(3)-methylcytidine methylation. This chain is tRNA N(3)-cytidine methyltransferase METTL6, found in Mus musculus (Mouse).